The sequence spans 233 residues: Large ribosomal subunit protein uL1 (233 aa).

This sequence belongs to the universal ribosomal protein uL1 family. As to quaternary structure, part of the 50S ribosomal subunit.

Its function is as follows. Binds directly to 23S rRNA. The L1 stalk is quite mobile in the ribosome, and is involved in E site tRNA release. Functionally, protein L1 is also a translational repressor protein, it controls the translation of the L11 operon by binding to its mRNA. The protein is Large ribosomal subunit protein uL1 of Rhodospirillum rubrum (strain ATCC 11170 / ATH 1.1.1 / DSM 467 / LMG 4362 / NCIMB 8255 / S1).